Reading from the N-terminus, the 303-residue chain is UDP-N-acetylenolpyruvoylglucosamine reductase (303 aa).

The region spanning 27–217 is the FAD-binding PCMH-type domain; it reads KVGGISQVFY…QTVRKLTQPI (191 aa). Residue R175 is part of the active site. The Proton donor role is filled by S224. E294 is an active-site residue.

It belongs to the MurB family. The cofactor is FAD.

The protein localises to the cytoplasm. The enzyme catalyses UDP-N-acetyl-alpha-D-muramate + NADP(+) = UDP-N-acetyl-3-O-(1-carboxyvinyl)-alpha-D-glucosamine + NADPH + H(+). It participates in cell wall biogenesis; peptidoglycan biosynthesis. In terms of biological role, cell wall formation. The polypeptide is UDP-N-acetylenolpyruvoylglucosamine reductase (Orientia tsutsugamushi (strain Ikeda) (Rickettsia tsutsugamushi)).